The primary structure comprises 196 residues: Small ribosomal subunit protein uS4m (196 aa).

Residues 88-154 (KRLDVILVRL…FKSNIRKNFQ (67 aa)) form the S4 RNA-binding domain.

It belongs to the universal ribosomal protein uS4 family.

It localises to the mitochondrion. This Marchantia polymorpha (Common liverwort) protein is Small ribosomal subunit protein uS4m (RPS4).